A 558-amino-acid chain; its full sequence is Protein NRT1/ PTR FAMILY 2.3 (558 aa).

Helical transmembrane passes span 33–53 (TLLG…VFLI), 69–89 (VANG…DSFF), 92–112 (IPVI…LTLI), 128–148 (VLCT…LALV), 176–196 (FFNW…TAIV), 203–223 (SWKL…IVFV), 329–349 (LWLS…LIVL), 371–391 (VIII…VFPM), 403–423 (LQKV…SAVV), 439–459 (VLWL…QFPA), 478–498 (SLTS…IDLI), and 517–537 (VYWL…VCSW).

Belongs to the major facilitator superfamily. Proton-dependent oligopeptide transporter (POT/PTR) (TC 2.A.17) family. In terms of tissue distribution, expressed in flowers, siliques and root epidermis or cortex. Detected in shoots.

The protein localises to the membrane. Transporter involved in a passive nitrate efflux. The sequence is that of Protein NRT1/ PTR FAMILY 2.3 (NPF2.3) from Arabidopsis thaliana (Mouse-ear cress).